The sequence spans 370 residues: Platelet-derived growth factor D (370 aa).

A signal peptide spans 1-18 (MHRLIFVYTLICANFCSC). The region spanning 52–170 (RDETIQVKGN…PGFKIYYSLL (119 aa)) is the CUB domain. The cysteines at positions 109 and 131 are disulfide-linked. N-linked (GlcNAc...) asparagine glycosylation is present at N276. 2 disulfides stabilise this stretch: C302/C360 and C306/C362.

Belongs to the PDGF/VEGF growth factor family. Homodimer; disulfide-linked. Interacts with PDGFRB homodimers, and with heterodimers formed by PDGFRA and PDGFRB. In terms of processing, activated by proteolytic cleavage. Proteolytic removal of the N-terminal CUB domain releasing the core domain is necessary for unmasking the receptor-binding epitopes of the core domain. Cleavage after Arg-247 or Arg-249 by urokinase plasminogen activator gives rise to the active form. Expressed at high levels in the heart, pancreas, adrenal gland and ovary and at low levels in placenta, liver, kidney, prostate, testis, small intestine, spleen and colon. In the kidney, expressed by the visceral epithelial cells of the glomeruli. A widespread expression is also seen in the medial smooth muscle cells of arteries and arterioles, as well as in smooth muscle cells of vasa rectae in the medullary area. Expressed in the adventitial connective tissue surrounding the suprarenal artery. In chronic obstructive nephropathy, a persistent expression is seen in glomerular visceral epithelial cells and vascular smooth muscle cells, as well as de novo expression by periglomerular interstitial cells and by some neointimal cells of atherosclerotic vessels. Expression in normal prostate is seen preferentially in the mesenchyme of the gland while expression is increased and more profuse in prostate carcinoma. Expressed in many ovarian, lung, renal and brain cancer-derived cell lines.

The protein resides in the secreted. In terms of biological role, growth factor that plays an essential role in the regulation of embryonic development, cell proliferation, cell migration, survival and chemotaxis. Potent mitogen for cells of mesenchymal origin. Plays an important role in wound healing. Induces macrophage recruitment, increased interstitial pressure, and blood vessel maturation during angiogenesis. Can initiate events that lead to a mesangial proliferative glomerulonephritis, including influx of monocytes and macrophages and production of extracellular matrix. This is Platelet-derived growth factor D (PDGFD) from Homo sapiens (Human).